The chain runs to 205 residues: High frequency lysogenization protein HflD homolog (205 aa).

The protein belongs to the HflD family.

It is found in the cytoplasm. The protein localises to the cell inner membrane. This Shewanella pealeana (strain ATCC 700345 / ANG-SQ1) protein is High frequency lysogenization protein HflD homolog.